The following is a 478-amino-acid chain: MATDSWALAVDEQEAAVKSMSSLQIKEEKVKADTNGVIKTSTTAEKTEEEEKEDRAAQSLLNKLIRSNLVDNTNQVEVLQRDPSSPLYSVKSFEELRLKPQLLQGVYAMGFNRPSKIQENALPMMLAEPPQNLIAQSQSGTGKTAAFVLAMLSRVEPADRYPQCLCLSPTYELALQTGKVIEQMGKFHPELKLAYAVRGNKLERGQKVSEQIVIGTPGTVLDWCSKLKFIDPKKIKVFVLDEADVMIATQGHQDQSIRIQRMLPRNCQMLLFSATFEDSVWKFAQKVVPDPNIIKLKREEETLDTIKQYYVLCNNREEKFQALCNLYGAITIAQAMIFCHTRKTASWLAAELSKEGHQVALLSGEMMVEQRAAVIERFREGKEKVLVTTNVCARGIDVEQVSVVINFDLPVDKDGNPDNETYLHRIGRTGRFGKRGLAVNMVDSKHSMNILNRIQEHFNKKIERLDTDDLDEIEKIAN.

Alanine 2 is modified (N-acetylalanine). The N-terminal lobe stretch occupies residues 2–299 (ATDSWALAVD…DPNIIKLKRE (298 aa)). Residue lysine 26 forms a Glycyl lysine isopeptide (Lys-Gly) (interchain with G-Cter in SUMO1); alternate linkage. Residue lysine 26 forms a Glycyl lysine isopeptide (Lys-Gly) (interchain with G-Cter in SUMO2); alternate linkage. Residues 34 to 53 (TNGVIKTSTTAEKTEEEEKE) are disordered. Residue threonine 42 is modified to Phosphothreonine. The segment at 54–67 (DRAAQSLLNKLIRS) is N-terminal helix. Residues 91-119 (KSFEELRLKPQLLQGVYAMGFNRPSKIQE) carry the Q motif motif. ATP is bound by residues glutamine 118 and 137-144 (SQSGTGKT). One can recognise a Helicase ATP-binding domain in the interval 124 to 294 (MMLAEPPQNL…QKVVPDPNII (171 aa)). The DEAD box motif lies at 241-244 (DEAD). Residues 300 to 478 (EETLDTIKQY…DLDEIEKIAN (179 aa)) are C-terminal lobe. Residues 305-473 (TIKQYYVLCN…RLDTDDLDEI (169 aa)) enclose the Helicase C-terminal domain. ATP is bound by residues arginine 428 and arginine 431.

It belongs to the DEAD box helicase family. DDX19/DBP5 subfamily. Found in testis, heart, brain, liver, skeletal muscle, and kidney.

It localises to the cytoplasm. The protein localises to the nucleus. The protein resides in the nucleoplasm. It catalyses the reaction ATP + H2O = ADP + phosphate + H(+). Its function is as follows. ATP-dependent RNA helicase involved in mRNA export from the nucleus. Rather than unwinding RNA duplexes, DDX19 functions as a remodeler of ribonucleoprotein particles, whereby proteins bound to nuclear mRNA are dissociated and replaced by cytoplasmic mRNA binding proteins. The polypeptide is ATP-dependent RNA helicase DDX19A (Ddx19a) (Mus musculus (Mouse)).